The sequence spans 435 residues: Methylenetetrahydrofolate--tRNA-(uracil-5-)-methyltransferase TrmFO (435 aa).

Position 9-14 (9-14 (GGGLAG)) interacts with FAD.

This sequence belongs to the MnmG family. TrmFO subfamily. Requires FAD as cofactor.

It localises to the cytoplasm. It catalyses the reaction uridine(54) in tRNA + (6R)-5,10-methylene-5,6,7,8-tetrahydrofolate + NADH + H(+) = 5-methyluridine(54) in tRNA + (6S)-5,6,7,8-tetrahydrofolate + NAD(+). The catalysed reaction is uridine(54) in tRNA + (6R)-5,10-methylene-5,6,7,8-tetrahydrofolate + NADPH + H(+) = 5-methyluridine(54) in tRNA + (6S)-5,6,7,8-tetrahydrofolate + NADP(+). Its function is as follows. Catalyzes the folate-dependent formation of 5-methyl-uridine at position 54 (M-5-U54) in all tRNAs. The protein is Methylenetetrahydrofolate--tRNA-(uracil-5-)-methyltransferase TrmFO of Geobacter sp. (strain M21).